The primary structure comprises 68 residues: Guanine nucleotide-binding protein G(I)/G(S)/G(O) subunit gamma-5 (68 aa).

Residue Ser-2 is modified to N-acetylserine. The residue at position 2 (Ser-2) is a Phosphoserine. A Cysteine methyl ester modification is found at Cys-65. Cys-65 carries S-geranylgeranyl cysteine lipidation. A propeptide spans 66–68 (removed in mature form); it reads SFL.

The protein belongs to the G protein gamma family. G proteins are composed of 3 units, alpha, beta and gamma. Expressed in a variety of tissues.

The protein localises to the cell membrane. Its function is as follows. Guanine nucleotide-binding proteins (G proteins) are involved as a modulator or transducer in various transmembrane signaling systems. The beta and gamma chains are required for the GTPase activity, for replacement of GDP by GTP, and for G protein-effector interaction. This chain is Guanine nucleotide-binding protein G(I)/G(S)/G(O) subunit gamma-5 (GNG5), found in Bos taurus (Bovine).